The sequence spans 154 residues: Ribosome maturation factor RimP (154 aa).

Belongs to the RimP family.

Its subcellular location is the cytoplasm. In terms of biological role, required for maturation of 30S ribosomal subunits. The chain is Ribosome maturation factor RimP from Salmonella gallinarum (strain 287/91 / NCTC 13346).